An 82-amino-acid polypeptide reads, in one-letter code: Progonadoliberin-3 (82 aa).

A signal peptide spans 1–23 (MDLSNRTVVQVVVLALVAQVTLS). Pyrrolidone carboxylic acid is present on glutamine 24. Glycine 33 carries the post-translational modification Glycine amide.

The protein belongs to the GnRH family.

Its subcellular location is the secreted. Its function is as follows. Stimulates the secretion of gonadotropins. The polypeptide is Progonadoliberin-3 (gnrh3) (Salmo trutta (Brown trout)).